The sequence spans 79 residues: Probable [Fe-S]-dependent transcriptional repressor (79 aa).

The iron-sulfur cluster site is built by Cys56, Cys61, Cys64, and Cys71.

Belongs to the FeoC family.

Functionally, may function as a transcriptional regulator that controls feoABC expression. This Klebsiella pneumoniae (strain 342) protein is Probable [Fe-S]-dependent transcriptional repressor.